The chain runs to 81 residues: Three-finger toxin MALT0057C (81 aa).

Residues 1–21 (MKTLLLTLVVVTIVCLDFGHT) form the signal peptide. 4 disulfides stabilise this stretch: cysteine 24–cysteine 43, cysteine 38–cysteine 60, cysteine 62–cysteine 73, and cysteine 74–cysteine 79.

This sequence belongs to the three-finger toxin family. Short-chain subfamily. Type I alpha-neurotoxin sub-subfamily. Expressed by the venom gland.

The protein localises to the secreted. Functionally, binds to muscle nicotinic acetylcholine receptor (nAChR) and inhibit acetylcholine from binding to the receptor, thereby impairing neuromuscular transmission. In Micrurus altirostris (Uruguayan coral snake), this protein is Three-finger toxin MALT0057C.